We begin with the raw amino-acid sequence, 442 residues long: DNA topoisomerase medium subunit (442 aa).

Positions 29-438 constitute a Topo IIA-type catalytic domain; that stretch reads IPNMIDGFKP…DVVTEYTKDL (410 aa). Y117 acts as the O-(5'-phospho-DNA)-tyrosine intermediate in catalysis.

It belongs to the type II topoisomerase family. In terms of assembly, part of the DNA topoisomerase complex made of gp39, gp52 and gp60. Mg(2+) serves as cofactor.

The enzyme catalyses ATP-dependent breakage, passage and rejoining of double-stranded DNA.. Its function is as follows. Medium subunit of the DNA topoisomerase that untwists superhelical DNA. Controls topological states of double-stranded DNA by transient breakage and subsequent rejoining of DNA strands. In Enterobacteria phage T4 (Bacteriophage T4), this protein is DNA topoisomerase medium subunit (52).